Here is a 230-residue protein sequence, read N- to C-terminus: Ephrin-A3 (230 aa).

An N-terminal signal peptide occupies residues 1–22; sequence MAAAPLLLLLLLVPVPLLPLLA. In terms of domain architecture, Ephrin RBD spans 30–161; sequence GNRHAVYWNS…RMKVFVCCAS (132 aa). Residues asparagine 38, asparagine 67, asparagine 84, and asparagine 92 are each glycosylated (N-linked (GlcNAc...) asparagine). 2 disulfide bridges follow: cysteine 63-cysteine 102 and cysteine 91-cysteine 150. Glycine 206 carries the GPI-anchor amidated glycine lipid modification. A propeptide spans 207–230 (removed in mature form); it reads TSPKREHLPLAVGIAFFLMTLLAS.

The protein belongs to the ephrin family. In terms of assembly, interacts with EPHA8; activates EPHA8. In terms of tissue distribution, expressed in myogenic progenitor cells.

The protein resides in the cell membrane. Its function is as follows. Cell surface GPI-bound ligand for Eph receptors, a family of receptor tyrosine kinases which are crucial for migration, repulsion and adhesion during neuronal, vascular and epithelial development. Binds promiscuously Eph receptors residing on adjacent cells, leading to contact-dependent bidirectional signaling into neighboring cells. The signaling pathway downstream of the receptor is referred to as forward signaling while the signaling pathway downstream of the ephrin ligand is referred to as reverse signaling. The polypeptide is Ephrin-A3 (Efna3) (Mus musculus (Mouse)).